The chain runs to 127 residues: Pleckstrin homology-like domain family A member 3 (127 aa).

Positions 5–108 (KVMNDGYLEK…RFKNRVAVQT (104 aa)) constitute a PH domain.

This sequence belongs to the PHLDA3 family.

The protein localises to the cytoplasm. It is found in the membrane. Functionally, p53/tp53-regulated repressor of Akt/akt1 signaling. Represses akt1 by preventing akt1-binding to membrane lipids, thereby inhibiting akt1 translocation to the cellular membrane and activation. Contributes to p53/tp53-dependent apoptosis by repressing akt1 activity. Its direct transcription regulation by p53/tp53 may explain how p53/tp53 can negatively regulate akt1. May act as a tumor suppressor. This chain is Pleckstrin homology-like domain family A member 3 (phlda3), found in Danio rerio (Zebrafish).